Reading from the N-terminus, the 631-residue chain is Sperm-associated antigen 16 protein (631 aa).

Residues 152-267 (DVYTQIMLLE…LQETLKKLQR (116 aa)) are a coiled coil. Positions 266–332 (QRGHSYHGPQ…QPNPNLNVSK (67 aa)) are disordered. 2 stretches are compositionally biased toward basic and acidic residues: residues 277–287 (KVDHSREKENA) and 295–304 (GLREAREQNK). WD repeat units lie at residues 350–389 (LHELPVSCVSMQPHKDILVSCGEDRLWKVLGLPKCNVLLT), 392–431 (GHTDWLSDCCFHPSGDKLATSSGDTTVKLWDLCKGDCILT), 434–473 (GHSRAVWSCTWHSCGNFVASSSLDKTSKIWDVNSERCRCT), 476–515 (GHTDSVNSIEFFPFSNTLLTSSADKTLSIWDARTGICEQS), 518–557 (GHMHSINDAIFDPRGHMIASCDACGVTKLWDFRKLLPIVS), 560–600 (IGPS…HKLM), and 601–630 (GHENEAHTVVFSHDGEILFSGGSDGTVRTW).

In terms of assembly, interacts with SPAG6 and STK36. Post-translationally, phosphorylated by TSSK2. In terms of tissue distribution, isoform 1 is detected in testis. Isoform 4 is detected in testis and brain, and at lower levels in kidney, heart, pancreas, thyroid, ovary, adrenal gland, spinal cord, trachea and liver.

The protein localises to the cytoplasm. The protein resides in the cytoskeleton. Its subcellular location is the flagellum axoneme. It localises to the cilium axoneme. It is found in the cell projection. The protein localises to the cilium. The protein resides in the flagellum. Functionally, necessary for sperm flagellar function. Plays a role in motile ciliogenesis. May help to recruit STK36 to the cilium or apical surface of the cell to initiate subsequent steps of construction of the central pair apparatus of motile cilia. In Homo sapiens (Human), this protein is Sperm-associated antigen 16 protein (SPAG16).